Consider the following 601-residue polypeptide: Elongation factor 4 (601 aa).

Positions 5–187 constitute a tr-type G domain; sequence IRKKNFCIIA…AICKYVPSPK (183 aa). GTP is bound by residues 17-22 and 134-137; these read DHGKST and NKID.

It belongs to the TRAFAC class translation factor GTPase superfamily. Classic translation factor GTPase family. LepA subfamily.

It is found in the cell inner membrane. The catalysed reaction is GTP + H2O = GDP + phosphate + H(+). Functionally, required for accurate and efficient protein synthesis under certain stress conditions. May act as a fidelity factor of the translation reaction, by catalyzing a one-codon backward translocation of tRNAs on improperly translocated ribosomes. Back-translocation proceeds from a post-translocation (POST) complex to a pre-translocation (PRE) complex, thus giving elongation factor G a second chance to translocate the tRNAs correctly. Binds to ribosomes in a GTP-dependent manner. The sequence is that of Elongation factor 4 from Borreliella afzelii (strain PKo) (Borrelia afzelii).